The chain runs to 99 residues: SAGA-associated factor 11 (99 aa).

The SGF11-type zinc-finger motif lies at 71–92 (IHCENCGRDVSANRLAAHLQRC).

It belongs to the SGF11 family. In terms of assembly, component of the 1.8 MDa SAGA transcription coactivator-HAT complex. SAGA is built of 5 distinct domains with specialized functions. Within the SAGA complex, SUS1, SGF11, SGF73 and UBP8 form an additional subcomplex of SAGA called the DUB module (deubiquitination module). Interacts directly with SGF73, SUS1 and UBP8.

It is found in the nucleus. Its function is as follows. Functions as a component of the transcription regulatory histone acetylation (HAT) complex SAGA. At the promoters, SAGA is required for recruitment of the basal transcription machinery. It influences RNA polymerase II transcriptional activity through different activities such as TBP interaction and promoter selectivity, interaction with transcription activators, and chromatin modification through histone acetylation and deubiquitination. SAGA acetylates nucleosomal histone H3 to some extent (to form H3K9ac, H3K14ac, H3K18ac and H3K23ac). SAGA interacts with DNA via upstream activating sequences (UASs). Involved in transcriptional regulation of a subset of SAGA-regulated genes. Within the SAGA complex, participates in a subcomplex, that specifically deubiquitinates histones H2B. The polypeptide is SAGA-associated factor 11 (Saccharomyces cerevisiae (strain RM11-1a) (Baker's yeast)).